The following is a 479-amino-acid chain: FAD-dependent monooxygenase cdmI (479 aa).

Residues glutamate 43, glycine 57, and arginine 116 each coordinate FAD. N-linked (GlcNAc...) asparagine glycans are attached at residues asparagine 156 and asparagine 198. FAD-binding residues include aspartate 315 and alanine 328. A helical transmembrane segment spans residues 453 to 473; it reads PFILAVLAGLGFLLTMFKQQW.

It belongs to the paxM FAD-dependent monooxygenase family. It depends on FAD as a cofactor.

The protein resides in the membrane. It catalyses the reaction verruculide C + AH2 + O2 = verruculide C epoxide + A + H2O. It participates in secondary metabolite biosynthesis; terpenoid biosynthesis. FAD-dependent monooxygenase; part of the gene cluster that mediates the biosynthesis of chrodrimanin B, a meroterpenoid that acts as a potent blocker of insect GABA-gated chloride channels. The first step of the pathway is the biosynthesis of 6-hydroxymellein by the polyketide synthase cdmE. The prenyltransferase cdmH acts as a 6-hydroxymellein 5-farnesyltransferase and produces the hydrophobic metabolite verruculide C. The FAD-dependent monooxygenase cdmI further converts verruculide C into verruculide B. The terpene cyclase cdmG then produced the pentacyclic molecule 3-hydroxypentacecilide A, the backbone structure of chrodrimanin B, via folding the farnesyl moiety of the substrate into the chair-boat conformation. The short-chain dehydrogenase/reductase cdmF functions as the 3-OH dehydrogenase that oxidizes the C-3 hydroxyl group of 3-hydroxypentacecilide A and produces chrodrimanin C, the dehydrogenated product of 3-hydroxypentacecilide A. The cytochrome P450 monooxygenase cdmJ then accepts both 3-hydroxypentacecilide A and chrodrimanin C and functions as a C-7-beta-hydroxylase to produce respectively chrodrimanin H and chrodrimanin F. The dioxygenase cdmA accepts chrodrimanin H to afford chrodrimanin E, which is further transformed to chrodrimanin A by the dioxygenase cdmD. CdmA can also accept chrodrimanin C as substrate to convert it into verruculide A, which is further converted into chrodrimanin T by cdmD. The last step of the biosynthesis is proposed to be performed by the acetyltransferase cdmC which acetylates chrodrimanin A to yield chrodrimanin B. The pathway may also lead to the production of additional shunt products, including chrodrimanins T and U. This chain is FAD-dependent monooxygenase cdmI, found in Talaromyces verruculosus (Penicillium verruculosum).